The sequence spans 215 residues: Small ribosomal subunit protein uS5 (215 aa).

Gly residues predominate over residues 1–12; it reads MSGTQRRGGGAG. The segment at 1-31 is disordered; that stretch reads MSGTQRRGGGAGGERRGRDNRRGQNDRNRNQ. The span at 13 to 31 shows a compositional bias: basic and acidic residues; that stretch reads GERRGRDNRRGQNDRNRNQ. One can recognise an S5 DRBM domain in the interval 34–97; the sequence is YLERVVAINR…EEAKKHFFKV (64 aa).

It belongs to the universal ribosomal protein uS5 family. As to quaternary structure, part of the 30S ribosomal subunit. Contacts proteins S4 and S8.

With S4 and S12 plays an important role in translational accuracy. Functionally, located at the back of the 30S subunit body where it stabilizes the conformation of the head with respect to the body. This chain is Small ribosomal subunit protein uS5, found in Cutibacterium acnes (strain DSM 16379 / KPA171202) (Propionibacterium acnes).